The following is a 355-amino-acid chain: UDP-N-acetylglucosamine--N-acetylmuramyl-(pentapeptide) pyrophosphoryl-undecaprenol N-acetylglucosamine transferase (355 aa).

Residues 15 to 17, asparagine 127, arginine 163, serine 191, isoleucine 244, 263 to 268, and glutamine 288 contribute to the UDP-N-acetyl-alpha-D-glucosamine site; these read TGG and ALTVSE.

This sequence belongs to the glycosyltransferase 28 family. MurG subfamily.

The protein localises to the cell inner membrane. It carries out the reaction di-trans,octa-cis-undecaprenyl diphospho-N-acetyl-alpha-D-muramoyl-L-alanyl-D-glutamyl-meso-2,6-diaminopimeloyl-D-alanyl-D-alanine + UDP-N-acetyl-alpha-D-glucosamine = di-trans,octa-cis-undecaprenyl diphospho-[N-acetyl-alpha-D-glucosaminyl-(1-&gt;4)]-N-acetyl-alpha-D-muramoyl-L-alanyl-D-glutamyl-meso-2,6-diaminopimeloyl-D-alanyl-D-alanine + UDP + H(+). Its pathway is cell wall biogenesis; peptidoglycan biosynthesis. Its function is as follows. Cell wall formation. Catalyzes the transfer of a GlcNAc subunit on undecaprenyl-pyrophosphoryl-MurNAc-pentapeptide (lipid intermediate I) to form undecaprenyl-pyrophosphoryl-MurNAc-(pentapeptide)GlcNAc (lipid intermediate II). This Salmonella enteritidis PT4 (strain P125109) protein is UDP-N-acetylglucosamine--N-acetylmuramyl-(pentapeptide) pyrophosphoryl-undecaprenol N-acetylglucosamine transferase.